We begin with the raw amino-acid sequence, 426 residues long: Serine--tRNA ligase (426 aa).

Residue 231-233 (TAE) participates in L-serine binding. ATP-binding positions include 262 to 264 (RRE) and Val278. Glu285 provides a ligand contact to L-serine. 349–352 (EVSS) lines the ATP pocket. Ser384 contributes to the L-serine binding site.

This sequence belongs to the class-II aminoacyl-tRNA synthetase family. Type-1 seryl-tRNA synthetase subfamily. In terms of assembly, homodimer. The tRNA molecule binds across the dimer.

The protein resides in the cytoplasm. It carries out the reaction tRNA(Ser) + L-serine + ATP = L-seryl-tRNA(Ser) + AMP + diphosphate + H(+). It catalyses the reaction tRNA(Sec) + L-serine + ATP = L-seryl-tRNA(Sec) + AMP + diphosphate + H(+). It functions in the pathway aminoacyl-tRNA biosynthesis; selenocysteinyl-tRNA(Sec) biosynthesis; L-seryl-tRNA(Sec) from L-serine and tRNA(Sec): step 1/1. Functionally, catalyzes the attachment of serine to tRNA(Ser). Is also able to aminoacylate tRNA(Sec) with serine, to form the misacylated tRNA L-seryl-tRNA(Sec), which will be further converted into selenocysteinyl-tRNA(Sec). The sequence is that of Serine--tRNA ligase from Chlamydia felis (strain Fe/C-56) (Chlamydophila felis).